A 189-amino-acid polypeptide reads, in one-letter code: Copper transport protein CTR2 (189 aa).

The Cytoplasmic portion of the chain corresponds to 1 to 81 (MDDKKTWSTV…VVFEWWHIKT (81 aa)). A helical membrane pass occupies residues 82-102 (LPGLILSCLAIFGLAYLYEYL). Topologically, residues 103–142 (KYCVHKRQLSQRVLLPNRSLTKINQADKVSNSILYGLQVG) are vacuolar. The helical transmembrane segment at 143–163 (FSFMLMLVFMTYNGWLMLAVV) threads the bilayer. Residues 164-189 (CGAIWGNYSWCTSYSPEIDDSSLACH) lie on the Cytoplasmic side of the membrane.

The protein belongs to the copper transporter (Ctr) (TC 1.A.56) family. SLC31A subfamily. As to quaternary structure, homomultimer.

The protein localises to the vacuole membrane. In terms of biological role, provides bioavailable copper via mobilization of vacuolar copper stores and export to the cytoplasm. This is Copper transport protein CTR2 (CTR2) from Saccharomyces cerevisiae (strain ATCC 204508 / S288c) (Baker's yeast).